Reading from the N-terminus, the 218-residue chain is MQNQLVVKRLGRRDYLPVWQAMHEFTDTRNEETPDEVWLVEHNPVFTQGQAGKAEHLLNTGDIPVVQSDRGGQVTYHGPGQLVAYFLINLRRKKLGVRDLVTTIENLVINTLKAYNIDSAARPDAPGVYVEGRKICSLGLRIRKGCSFHGLALNVNMDLSPFLRINPCGYQGMEMVQVSELGGPKDIALVEQQLVKELVNLLGYEQVEFSTEAEVREA.

The BPL/LPL catalytic domain occupies 31–206; sequence EETPDEVWLV…ELVNLLGYEQ (176 aa). Substrate-binding positions include 70–77, 137–139, and 150–152; these read RGGQVTYH, SLG, and GLA. The Acyl-thioester intermediate role is filled by Cys-168.

The protein belongs to the LipB family.

It is found in the cytoplasm. It catalyses the reaction octanoyl-[ACP] + L-lysyl-[protein] = N(6)-octanoyl-L-lysyl-[protein] + holo-[ACP] + H(+). Its pathway is protein modification; protein lipoylation via endogenous pathway; protein N(6)-(lipoyl)lysine from octanoyl-[acyl-carrier-protein]: step 1/2. Its function is as follows. Catalyzes the transfer of endogenously produced octanoic acid from octanoyl-acyl-carrier-protein onto the lipoyl domains of lipoate-dependent enzymes. Lipoyl-ACP can also act as a substrate although octanoyl-ACP is likely to be the physiological substrate. The protein is Octanoyltransferase of Vibrio vulnificus (strain CMCP6).